A 284-amino-acid polypeptide reads, in one-letter code: MYVVSTKQMLNNAQRGGYAVPAFNIHNLETMQVVVETAANLHAPVIIAGTPGTFTHAGTENLLALVSAMAKQYHHPLAIHLDHHTKFDDIAQKVRSGVRSVMIDASHLPFAQNISRVKEVVDFCHRFDVSVEAELGQLGGQEDDVQVNEADAFYTNPAQAREFAEATGIDSLAVAIGTAHGMYASAPALDFSRLENIRQWVNLPLVLHGASGLSTKDIQQTIKLGICKINVATELKNAFSQALKNYLTEHPEATDPRDYLQSAKSAMRDVVSKVIADCGCEGRA.

Residue Asp82 is the Proton donor of the active site. His83 and His180 together coordinate Zn(2+). Gly181 is a binding site for dihydroxyacetone phosphate. Residue His208 coordinates Zn(2+). Dihydroxyacetone phosphate contacts are provided by residues 209-211 and 230-233; these read GAS and NVAT.

Belongs to the class II fructose-bisphosphate aldolase family. TagBP aldolase GatY subfamily. Forms a complex with GatZ. Requires Zn(2+) as cofactor.

It carries out the reaction D-tagatofuranose 1,6-bisphosphate = D-glyceraldehyde 3-phosphate + dihydroxyacetone phosphate. Its pathway is carbohydrate metabolism; D-tagatose 6-phosphate degradation; D-glyceraldehyde 3-phosphate and glycerone phosphate from D-tagatose 6-phosphate: step 2/2. Its function is as follows. Catalytic subunit of the tagatose-1,6-bisphosphate aldolase GatYZ, which catalyzes the reversible aldol condensation of dihydroxyacetone phosphate (DHAP or glycerone-phosphate) with glyceraldehyde 3-phosphate (G3P) to produce tagatose 1,6-bisphosphate (TBP). Requires GatZ subunit for full activity and stability. Is involved in the catabolism of galactitol. This Escherichia coli O8 (strain IAI1) protein is D-tagatose-1,6-bisphosphate aldolase subunit GatY.